The chain runs to 349 residues: Isopentenyl-diphosphate delta-isomerase (349 aa).

5–6 is a substrate binding site; the sequence is RK. FMN contacts are provided by residues Ser-61, 62–64, Ser-92, and Asn-120; that span reads SMT. Substrate is bound at residue 92–94; the sequence is SMR. Residue Gln-159 participates in substrate binding. A Mg(2+)-binding site is contributed by Glu-160. Residues Lys-189, Thr-219, 269-271, and 290-291 contribute to the FMN site; these read GLR and AR.

This sequence belongs to the IPP isomerase type 2 family. As to quaternary structure, homooctamer. Dimer of tetramers. FMN is required as a cofactor. The cofactor is NADPH. Requires Mg(2+) as cofactor.

It is found in the cytoplasm. It catalyses the reaction isopentenyl diphosphate = dimethylallyl diphosphate. Functionally, involved in the biosynthesis of isoprenoids. Catalyzes the 1,3-allylic rearrangement of the homoallylic substrate isopentenyl (IPP) to its allylic isomer, dimethylallyl diphosphate (DMAPP). This is Isopentenyl-diphosphate delta-isomerase from Picrophilus torridus (strain ATCC 700027 / DSM 9790 / JCM 10055 / NBRC 100828 / KAW 2/3).